The sequence spans 392 residues: ABSCISIC ACID-INSENSITIVE 5-like protein 4 (392 aa).

A disordered region spans residues 1 to 22 (MGTHIDINNLGGDTSRGNESKP). 3 positions are modified to phosphoserine: S28, S50, and S96. T135 is subject to Phosphothreonine. The disordered stretch occupies residues 266–297 (NMGGAGGTVTATSPGTSSAENNTWSSPVPYVF). Positions 274-291 (VTATSPGTSSAENNTWSS) are enriched in polar residues. One can recognise a bZIP domain in the interval 311–374 (VERRQKRMIK…NSELKEFSKQ (64 aa)). Positions 313–332 (RRQKRMIKNRESAARSRARK) are basic motif. A leucine-zipper region spans residues 339 to 360 (LEAEIESLKLVNQDLQKKQAEI).

The protein belongs to the bZIP family. ABI5 subfamily. In terms of assembly, DNA-binding heterodimer. Interacts with ABI3 and the AFP proteins AFP1, AFP2, AFP3 and AFP4. Post-translationally, phosphorylated by CPK4, CPK11, SRK2D and SRK2I in vitro.

The protein resides in the nucleus. Functionally, binds to the ABA-responsive element (ABRE). Could participate in abscisic acid-regulated gene expression. This is ABSCISIC ACID-INSENSITIVE 5-like protein 4 (ABF1) from Arabidopsis thaliana (Mouse-ear cress).